A 504-amino-acid polypeptide reads, in one-letter code: Ribose import ATP-binding protein RbsA (504 aa).

ABC transporter domains are found at residues 6–242 and 252–495; these read LELK…VGRR and VRHG…VGKT. Position 38–45 (38–45) interacts with ATP; sequence GENGAGKS.

Belongs to the ABC transporter superfamily. Ribose importer (TC 3.A.1.2.1) family. As to quaternary structure, the complex is composed of an ATP-binding protein (RbsA), two transmembrane proteins (RbsC) and a solute-binding protein (RbsB).

The protein localises to the cell inner membrane. It catalyses the reaction D-ribose(out) + ATP + H2O = D-ribose(in) + ADP + phosphate + H(+). Its function is as follows. Part of the ABC transporter complex RbsABC involved in ribose import. Responsible for energy coupling to the transport system. The chain is Ribose import ATP-binding protein RbsA from Photobacterium profundum (strain SS9).